Here is a 205-residue protein sequence, read N- to C-terminus: Holliday junction branch migration complex subunit RuvA (205 aa).

The segment at 1-64 (MIGKLKGVID…EDMIRLYGFA (64 aa)) is domain I. The interval 65–143 (TQLEREWFRL…AFAGEASGTI (79 aa)) is domain II. The segment at 144 to 152 (GLKQELGAG) is flexible linker. Residues 153–205 (AAPAPVADAVSALSNLGYSRDQAANAVAAALKETGEGADSAKLIRLGLKELSQ) form a domain III region.

The protein belongs to the RuvA family. In terms of assembly, homotetramer. Forms an RuvA(8)-RuvB(12)-Holliday junction (HJ) complex. HJ DNA is sandwiched between 2 RuvA tetramers; dsDNA enters through RuvA and exits via RuvB. An RuvB hexamer assembles on each DNA strand where it exits the tetramer. Each RuvB hexamer is contacted by two RuvA subunits (via domain III) on 2 adjacent RuvB subunits; this complex drives branch migration. In the full resolvosome a probable DNA-RuvA(4)-RuvB(12)-RuvC(2) complex forms which resolves the HJ.

It is found in the cytoplasm. Functionally, the RuvA-RuvB-RuvC complex processes Holliday junction (HJ) DNA during genetic recombination and DNA repair, while the RuvA-RuvB complex plays an important role in the rescue of blocked DNA replication forks via replication fork reversal (RFR). RuvA specifically binds to HJ cruciform DNA, conferring on it an open structure. The RuvB hexamer acts as an ATP-dependent pump, pulling dsDNA into and through the RuvAB complex. HJ branch migration allows RuvC to scan DNA until it finds its consensus sequence, where it cleaves and resolves the cruciform DNA. This chain is Holliday junction branch migration complex subunit RuvA, found in Brucella abortus (strain S19).